The following is a 208-amino-acid chain: Uracil phosphoribosyltransferase (208 aa).

5-phospho-alpha-D-ribose 1-diphosphate-binding positions include arginine 78, arginine 103, and 130–138 (DPMLATGGS). Uracil is bound by residues isoleucine 193 and 198 to 200 (GDA). Residue aspartate 199 participates in 5-phospho-alpha-D-ribose 1-diphosphate binding.

The protein belongs to the UPRTase family. The cofactor is Mg(2+).

The catalysed reaction is UMP + diphosphate = 5-phospho-alpha-D-ribose 1-diphosphate + uracil. It participates in pyrimidine metabolism; UMP biosynthesis via salvage pathway; UMP from uracil: step 1/1. Allosterically activated by GTP. Catalyzes the conversion of uracil and 5-phospho-alpha-D-ribose 1-diphosphate (PRPP) to UMP and diphosphate. This Thermus thermophilus (strain ATCC 27634 / DSM 579 / HB8) protein is Uracil phosphoribosyltransferase.